The following is a 256-amino-acid chain: Trypsin epsilon (256 aa).

A signal peptide spans 1 to 22 (MLKIAVLLSVLACALAGTIPDG). Residues 23-30 (LLPQLDGR) constitute a propeptide, activation peptide. Residues 31-254 (IVGGYETSID…FHEWIERTAR (224 aa)) form the Peptidase S1 domain. The cysteines at positions 56 and 72 are disulfide-linked. Catalysis depends on charge relay system residues histidine 71 and aspartate 116. Cystine bridges form between cysteine 180-cysteine 197 and cysteine 206-cysteine 230. Serine 210 serves as the catalytic Charge relay system.

This sequence belongs to the peptidase S1 family.

The protein localises to the secreted. Its subcellular location is the extracellular space. It catalyses the reaction Preferential cleavage: Arg-|-Xaa, Lys-|-Xaa.. In Drosophila erecta (Fruit fly), this protein is Trypsin epsilon (epsilonTry).